A 414-amino-acid polypeptide reads, in one-letter code: Enolase (414 aa).

Glutamine 162 provides a ligand contact to (2R)-2-phosphoglycerate. Glutamate 204 functions as the Proton donor in the catalytic mechanism. Mg(2+)-binding residues include aspartate 239, glutamate 280, and aspartate 307. Residues lysine 332, arginine 361, serine 362, and lysine 383 each contribute to the (2R)-2-phosphoglycerate site. Lysine 332 (proton acceptor) is an active-site residue.

The protein belongs to the enolase family. It depends on Mg(2+) as a cofactor.

The protein resides in the cytoplasm. The protein localises to the secreted. It is found in the cell surface. The catalysed reaction is (2R)-2-phosphoglycerate = phosphoenolpyruvate + H2O. It functions in the pathway carbohydrate degradation; glycolysis; pyruvate from D-glyceraldehyde 3-phosphate: step 4/5. Its function is as follows. Catalyzes the reversible conversion of 2-phosphoglycerate (2-PG) into phosphoenolpyruvate (PEP). It is essential for the degradation of carbohydrates via glycolysis. In Campylobacter jejuni (strain RM1221), this protein is Enolase.